The sequence spans 347 residues: NADH-ubiquinone oxidoreductase chain 2 (347 aa).

10 helical membrane passes run 13 to 33, 55 to 75, 96 to 116, 123 to 143, 149 to 169, 178 to 198, 201 to 221, 247 to 267, 274 to 294, and 326 to 346; these read IFAG…WVGL, AAIK…MAIL, LMIM…FWVP, PLMS…SIMY, LNVN…SWGG, ILAY…PYNP, TILN…LLNL, TLLS…WVII, NSLI…YFYL, and LPTL…MLMI.

Belongs to the complex I subunit 2 family. Core subunit of respiratory chain NADH dehydrogenase (Complex I) which is composed of 45 different subunits. Interacts with TMEM242.

Its subcellular location is the mitochondrion inner membrane. The catalysed reaction is a ubiquinone + NADH + 5 H(+)(in) = a ubiquinol + NAD(+) + 4 H(+)(out). Its function is as follows. Core subunit of the mitochondrial membrane respiratory chain NADH dehydrogenase (Complex I) which catalyzes electron transfer from NADH through the respiratory chain, using ubiquinone as an electron acceptor. Essential for the catalytic activity and assembly of complex I. The polypeptide is NADH-ubiquinone oxidoreductase chain 2 (Pan paniscus (Pygmy chimpanzee)).